Reading from the N-terminus, the 356-residue chain is Dual-specificity RNA methyltransferase RlmN (356 aa).

The active-site Proton acceptor is the Glu87. One can recognise a Radical SAM core domain in the interval 106–339; that stretch reads QEAKYTICVS…CTIRDSKGID (234 aa). Cys113 and Cys344 are joined by a disulfide. Positions 120, 124, and 127 each coordinate [4Fe-4S] cluster. Residues 170 to 171, Ser202, 225 to 227, and Asn301 each bind S-adenosyl-L-methionine; these read GE and SLH. Catalysis depends on Cys344, which acts as the S-methylcysteine intermediate.

It belongs to the radical SAM superfamily. RlmN family. The cofactor is [4Fe-4S] cluster.

It localises to the cytoplasm. It carries out the reaction adenosine(2503) in 23S rRNA + 2 reduced [2Fe-2S]-[ferredoxin] + 2 S-adenosyl-L-methionine = 2-methyladenosine(2503) in 23S rRNA + 5'-deoxyadenosine + L-methionine + 2 oxidized [2Fe-2S]-[ferredoxin] + S-adenosyl-L-homocysteine. The enzyme catalyses adenosine(37) in tRNA + 2 reduced [2Fe-2S]-[ferredoxin] + 2 S-adenosyl-L-methionine = 2-methyladenosine(37) in tRNA + 5'-deoxyadenosine + L-methionine + 2 oxidized [2Fe-2S]-[ferredoxin] + S-adenosyl-L-homocysteine. In terms of biological role, specifically methylates position 2 of adenine 2503 in 23S rRNA and position 2 of adenine 37 in tRNAs. m2A2503 modification seems to play a crucial role in the proofreading step occurring at the peptidyl transferase center and thus would serve to optimize ribosomal fidelity. This is Dual-specificity RNA methyltransferase RlmN from Sulfurimonas denitrificans (strain ATCC 33889 / DSM 1251) (Thiomicrospira denitrificans (strain ATCC 33889 / DSM 1251)).